Reading from the N-terminus, the 329-residue chain is MVREKVKVSTRTLQWKCVESKRDSKRLYYGRFILSPLMKGQADTIGIAMRRALLGEIEGTCITRAKSENIPHDYSNIAGIQESVHEILMNLNEIVLRSNLYGTRNALICVQGPGYITARDIILPPAVEIIDNTQHIATLTEPIDLCIELKIERNRGYSLKMSNNFEDRSYPIDAVFMPVENANHSIHSYGNGNEKQEILFLEIWTNGSLTPKEALHQASRNLINLFIPFLHVEEETFYLENNQHQVTLPFFPFHNRLVNLRKKKKTKELAFQYIFIDQLELPPRIYNCLKKSNIHTLLDLLNNSQEDLIKIEHFHVEDVKKILDILEKK.

An alpha N-terminal domain (alpha-NTD) region spans residues 1 to 233; that stretch reads MVREKVKVST…NLFIPFLHVE (233 aa). The tract at residues 266–329 is alpha C-terminal domain (alpha-CTD); it reads TKELAFQYIF…KKILDILEKK (64 aa).

The protein belongs to the RNA polymerase alpha chain family. In terms of assembly, in plastids the minimal PEP RNA polymerase catalytic core is composed of four subunits: alpha, beta, beta', and beta''. When a (nuclear-encoded) sigma factor is associated with the core the holoenzyme is formed, which can initiate transcription.

It is found in the plastid. It localises to the chloroplast. It catalyses the reaction RNA(n) + a ribonucleoside 5'-triphosphate = RNA(n+1) + diphosphate. Its function is as follows. DNA-dependent RNA polymerase catalyzes the transcription of DNA into RNA using the four ribonucleoside triphosphates as substrates. The sequence is that of DNA-directed RNA polymerase subunit alpha from Arabidopsis thaliana (Mouse-ear cress).